The chain runs to 655 residues: Fructose-1,6-bisphosphatase class 3 (655 aa).

The protein belongs to the FBPase class 3 family. Requires Mn(2+) as cofactor.

It carries out the reaction beta-D-fructose 1,6-bisphosphate + H2O = beta-D-fructose 6-phosphate + phosphate. It participates in carbohydrate biosynthesis; gluconeogenesis. This chain is Fructose-1,6-bisphosphatase class 3, found in Porphyromonas gingivalis (strain ATCC 33277 / DSM 20709 / CIP 103683 / JCM 12257 / NCTC 11834 / 2561).